Here is a 407-residue protein sequence, read N- to C-terminus: Dual-specificity RNA methyltransferase RlmN (407 aa).

The active-site Proton acceptor is E136. Residues 144–378 (REDRGAVCIS…MDAGFASPIR (235 aa)) enclose the Radical SAM core domain. Residues C151 and C389 are joined by a disulfide bond. C158, C162, and C165 together coordinate [4Fe-4S] cluster. S-adenosyl-L-methionine contacts are provided by residues 215–216 (GE), S247, 269–271 (SLH), and N346. The active-site S-methylcysteine intermediate is the C389.

It belongs to the radical SAM superfamily. RlmN family. [4Fe-4S] cluster is required as a cofactor.

It localises to the cytoplasm. The enzyme catalyses adenosine(2503) in 23S rRNA + 2 reduced [2Fe-2S]-[ferredoxin] + 2 S-adenosyl-L-methionine = 2-methyladenosine(2503) in 23S rRNA + 5'-deoxyadenosine + L-methionine + 2 oxidized [2Fe-2S]-[ferredoxin] + S-adenosyl-L-homocysteine. The catalysed reaction is adenosine(37) in tRNA + 2 reduced [2Fe-2S]-[ferredoxin] + 2 S-adenosyl-L-methionine = 2-methyladenosine(37) in tRNA + 5'-deoxyadenosine + L-methionine + 2 oxidized [2Fe-2S]-[ferredoxin] + S-adenosyl-L-homocysteine. In terms of biological role, specifically methylates position 2 of adenine 2503 in 23S rRNA and position 2 of adenine 37 in tRNAs. m2A2503 modification seems to play a crucial role in the proofreading step occurring at the peptidyl transferase center and thus would serve to optimize ribosomal fidelity. The protein is Dual-specificity RNA methyltransferase RlmN of Gluconobacter oxydans (strain 621H) (Gluconobacter suboxydans).